The following is a 305-amino-acid chain: Acetylglutamate kinase (305 aa).

Residues 78–79 (GG), Arg-100, and Asn-202 each bind substrate.

This sequence belongs to the acetylglutamate kinase family. ArgB subfamily.

Its subcellular location is the cytoplasm. It carries out the reaction N-acetyl-L-glutamate + ATP = N-acetyl-L-glutamyl 5-phosphate + ADP. Its pathway is amino-acid biosynthesis; L-arginine biosynthesis; N(2)-acetyl-L-ornithine from L-glutamate: step 2/4. Its function is as follows. Catalyzes the ATP-dependent phosphorylation of N-acetyl-L-glutamate. The polypeptide is Acetylglutamate kinase (Polaromonas sp. (strain JS666 / ATCC BAA-500)).